The following is a 287-amino-acid chain: tRNA-cytidine(32) 2-sulfurtransferase (287 aa).

The short motif at 39–44 (SGGKDS) is the PP-loop motif element. Residues Cys114, Cys117, and Cys205 each contribute to the [4Fe-4S] cluster site.

This sequence belongs to the TtcA family. As to quaternary structure, homodimer. It depends on Mg(2+) as a cofactor. [4Fe-4S] cluster serves as cofactor.

Its subcellular location is the cytoplasm. The catalysed reaction is cytidine(32) in tRNA + S-sulfanyl-L-cysteinyl-[cysteine desulfurase] + AH2 + ATP = 2-thiocytidine(32) in tRNA + L-cysteinyl-[cysteine desulfurase] + A + AMP + diphosphate + H(+). Its pathway is tRNA modification. Its function is as follows. Catalyzes the ATP-dependent 2-thiolation of cytidine in position 32 of tRNA, to form 2-thiocytidine (s(2)C32). The sulfur atoms are provided by the cysteine/cysteine desulfurase (IscS) system. This chain is tRNA-cytidine(32) 2-sulfurtransferase, found in Dechloromonas aromatica (strain RCB).